Here is a 718-residue protein sequence, read N- to C-terminus: Polyribonucleotide nucleotidyltransferase (718 aa).

Mg(2+)-binding residues include D493 and D499. One can recognise a KH domain in the interval 560–619 (PRVIKKQIDPDKIRNVIGPGGKMINKIIDETGVKIDIEPDGLIYISSSDAEQAEQAIKAI). In terms of domain architecture, S1 motif spans 629-697 (GEVYLGKVVR…ERGRINLSRK (69 aa)). The interval 695 to 718 (SRKQALGEEDGKTNNDDKKSTKKT) is disordered. Positions 699-718 (ALGEEDGKTNNDDKKSTKKT) are enriched in basic and acidic residues.

The protein belongs to the polyribonucleotide nucleotidyltransferase family. Mg(2+) serves as cofactor.

It localises to the cytoplasm. The enzyme catalyses RNA(n+1) + phosphate = RNA(n) + a ribonucleoside 5'-diphosphate. Involved in mRNA degradation. Catalyzes the phosphorolysis of single-stranded polyribonucleotides processively in the 3'- to 5'-direction. The polypeptide is Polyribonucleotide nucleotidyltransferase (Natranaerobius thermophilus (strain ATCC BAA-1301 / DSM 18059 / JW/NM-WN-LF)).